Consider the following 552-residue polypeptide: Mothers against decapentaplegic homolog 4 (552 aa).

The segment at Met-1–Tyr-322 is mediates interaction with ZBTB7A. In terms of domain architecture, MH1 spans Ser-18–Asp-142. Lys-37 carries the N6-acetyllysine modification. The interval Val-44 to Ser-69 is required for interaction with TSC22D1. Cys-71 is a Zn(2+) binding site. A Glycyl lysine isopeptide (Lys-Gly) (interchain with G-Cter in SUMO2) cross-link involves residue Lys-113. Zn(2+) is bound by residues Cys-115, Cys-127, and His-132. Positions Glu-167–Glu-193 are disordered. Over residues His-177–Glu-193 the composition is skewed to polar residues. Residues Pro-275–Pro-320 form an SAD region. Residues Trp-323 to Asp-552 form the MH2 domain. N6-acetyllysine is present on residues Lys-428 and Lys-507. Lys-519 participates in a covalent cross-link: Glycyl lysine isopeptide (Lys-Gly) (interchain with G-Cter in ubiquitin).

The protein belongs to the dwarfin/SMAD family. In terms of assembly, monomer; in the absence of TGF-beta activation. Heterotrimer; on TGF-beta activation. Heterotrimer composed of two molecules of a C-terminally phosphorylated R-SMAD molecule, SMAD2 or SMAD3, and one molecule of SMAD4 to form the transcriptional active SMAD2/SMAD3-SMAD4 complex. Found in a ternary complex composed of SMAD4, STK11/LKB1 and STK11IP. Found in a complex with SMAD1 and YY1. Identified in a complex that contains at least ZNF451, SMAD2, SMAD3 and SMAD4. Interacts with ATF2, COPS5, DACH1, MSG1, SKI, STK11/LKB1, STK11IP and TRIM33. Associates with ZNF423 or ZNF521 in response to BMP2 leading to activate transcription of BMP target genes. Interacts with USP9X. Interacts with RBPMS. Interacts with WWTR1 (via coiled-coil domain). Interacts with CITED1 and CITED2. Interacts with PDPK1 (via PH domain). Interacts with VPS39; this interaction affects heterodimer formation with SMAD3, but not with SMAD2, and leads to inhibition of SMAD3-dependent transcription activation. Interactions with VPS39 and SMAD2 may be mutually exclusive. Interacts (via MH2 domain) with ZNF451 (via N-terminal zinc-finger domains). Interacts with ZC3H3. Interacts weakly with ZNF8. Interacts with NUP93 and IPO7; translocates SMAD4 to the nucleus through the NPC upon BMP7 stimulation resulting in activation of SMAD4 signaling. Interacts with CREB3L1, the interaction takes place upon TGFB1 induction and SMAD4 acts as a CREB3L1 coactivator to induce the expression of genes involved in the assembly of collagen extracellular matrix. Interacts with DLX1. Interacts with ZBTB7A; the interaction is direct and stimulated by TGFB1. Interacts with CREBBP; the recruitment of this transcriptional coactivator is negatively regulated by ZBTB7A. Interacts with EP300; the interaction with this transcriptional coactivator is negatively regulated by ZBTB7A. Interacts with HDAC1. Interacts (via MH2 domain) with ZMIZ1 (via SP-RING-type domain); in the TGF-beta signaling pathway increases the activity of the SMAD3/SMAD4 transcriptional complex. Interacts (via N-terminus) with TSC22D1. Post-translationally, phosphorylated by PDPK1. In terms of processing, monoubiquitinated on Lys-519 by E3 ubiquitin-protein ligase TRIM33. Monoubiquitination hampers its ability to form a stable complex with activated SMAD2/3 resulting in inhibition of TGF-beta/BMP signaling cascade. Deubiquitination by USP9X restores its competence to mediate TGF-beta signaling.

Its subcellular location is the cytoplasm. It is found in the nucleus. Its function is as follows. Common SMAD (co-SMAD) is the coactivator and mediator of signal transduction by TGF-beta (transforming growth factor). Component of the heterotrimeric SMAD2/SMAD3-SMAD4 complex that forms in the nucleus and is required for the TGF-mediated signaling. Promotes binding of the SMAD2/SMAD4/FAST-1 complex to DNA and provides an activation function required for SMAD1 or SMAD2 to stimulate transcription. Component of the multimeric SMAD3/SMAD4/JUN/FOS complex which forms at the AP1 promoter site; required for synergistic transcriptional activity in response to TGF-beta. Acts synergistically with SMAD1 and YY1 in bone morphogenetic protein (BMP)-mediated cardiac-specific gene expression. Binds to SMAD binding elements (SBEs) (5'-GTCT/AGAC-3') within BMP response element (BMPRE) of cardiac activating regions. May act as a tumor suppressor. Positively regulates PDPK1 kinase activity by stimulating its dissociation from the 14-3-3 protein YWHAQ which acts as a negative regulator. In muscle physiology, plays a central role in the balance between atrophy and hypertrophy. When recruited by MSTN, promotes atrophy response via phosphorylated SMAD2/4. MSTN decrease causes SMAD4 release and subsequent recruitment by the BMP pathway to promote hypertrophy via phosphorylated SMAD1/5/8. The sequence is that of Mothers against decapentaplegic homolog 4 (Smad4) from Rattus norvegicus (Rat).